The following is a 661-amino-acid chain: UvrABC system protein B (661 aa).

A Helicase ATP-binding domain is found at Ala25–Arg182. An ATP-binding site is contributed by Gly38–Thr45. The Beta-hairpin motif lies at Tyr91 to Ile114. The Helicase C-terminal domain occupies Gln430 to Ile592. The UVR domain occupies Lys621–Ala656.

It belongs to the UvrB family. As to quaternary structure, forms a heterotetramer with UvrA during the search for lesions. Interacts with UvrC in an incision complex.

The protein localises to the cytoplasm. In terms of biological role, the UvrABC repair system catalyzes the recognition and processing of DNA lesions. A damage recognition complex composed of 2 UvrA and 2 UvrB subunits scans DNA for abnormalities. Upon binding of the UvrA(2)B(2) complex to a putative damaged site, the DNA wraps around one UvrB monomer. DNA wrap is dependent on ATP binding by UvrB and probably causes local melting of the DNA helix, facilitating insertion of UvrB beta-hairpin between the DNA strands. Then UvrB probes one DNA strand for the presence of a lesion. If a lesion is found the UvrA subunits dissociate and the UvrB-DNA preincision complex is formed. This complex is subsequently bound by UvrC and the second UvrB is released. If no lesion is found, the DNA wraps around the other UvrB subunit that will check the other stand for damage. This is UvrABC system protein B from Rickettsia canadensis (strain McKiel).